The sequence spans 88 residues: Acylphosphatase (88 aa).

Residues 3-88 enclose the Acylphosphatase-like domain; it reads AVDVLISGRV…RAGHQGFEVR (86 aa). Active-site residues include Arg-18 and Asn-36.

Belongs to the acylphosphatase family.

It catalyses the reaction an acyl phosphate + H2O = a carboxylate + phosphate + H(+). The polypeptide is Acylphosphatase (acyP) (Methanocella arvoryzae (strain DSM 22066 / NBRC 105507 / MRE50)).